We begin with the raw amino-acid sequence, 316 residues long: Olfactory receptor 6B9 (316 aa).

Residues 1–22 are Extracellular-facing; it reads MENITNISEFILMGFPTAPWLQ. N-linked (GlcNAc...) asparagine glycans are attached at residues Asn-3 and Asn-6. Residues 23-43 form a helical membrane-spanning segment; that stretch reads ILLFSIFFITYVFVLLENLVI. The Cytoplasmic segment spans residues 44-64; the sequence is ILTVWVTGSLHKPMYYFLSTM. Residues 65 to 85 form a helical membrane-spanning segment; sequence SFLEAWYISVTVPKMLAGFLF. Over 86-97 the chain is Extracellular; that stretch reads RPNTISFLGCMT. Cys-95 and Cys-187 form a disulfide bridge. A helical transmembrane segment spans residues 98–118; that stretch reads QLYFFMSLACTECVLLAAMAY. Topologically, residues 119-132 are cytoplasmic; that stretch reads DRYVAICWPLRYPV. The chain crosses the membrane as a helical span at residues 133-153; that stretch reads MMTTGFCVQLTISSWVSGFTI. The Extracellular segment spans residues 154 to 199; sequence SMAKVYFISRVAFCGNNVLNHFFCDVSPILKLACMNLSMAETVDFA. A helical transmembrane segment spans residues 200–220; it reads LAIVILIFPLSATVLSYGFIV. Topologically, residues 221-237 are cytoplasmic; that stretch reads STVLQIPSATGQRKAFS. A helical transmembrane segment spans residues 238–258; it reads TCASHLTVVVIFYTAVIFMYV. Topologically, residues 259–269 are extracellular; that stretch reads RPRAIASFNSN. Residues 270–290 traverse the membrane as a helical segment; that stretch reads KLISAIYAVFTPMLNPIIYCL. Residues 291–316 lie on the Cytoplasmic side of the membrane; it reads RNKEVKDAIRKTIAGGRAPALGESIS.

The protein belongs to the G-protein coupled receptor 1 family. Olfactory epithelium.

The protein resides in the cell membrane. In terms of biological role, odorant receptor. This is Olfactory receptor 6B9 from Mus musculus (Mouse).